The primary structure comprises 434 residues: dTDP-D-glucose 4,6-dehydratase (434 aa).

Substrate is bound at residue T134. Catalysis depends on D135, which acts as the Proton donor. Active-site proton acceptor residues include E136 and Y169. Over residues 286–309 (NNNNNNNNNNNNNNNNNNNNNNNN) the composition is skewed to low complexity. A disordered region spans residues 286–310 (NNNNNNNNNNNNNNNNNNNNNNNND).

Belongs to the NAD(P)-dependent epimerase/dehydratase family. dTDP-glucose dehydratase subfamily. Requires NAD(+) as cofactor.

The enzyme catalyses dTDP-alpha-D-glucose = dTDP-4-dehydro-6-deoxy-alpha-D-glucose + H2O. The chain is dTDP-D-glucose 4,6-dehydratase (tgds) from Dictyostelium discoideum (Social amoeba).